The chain runs to 94 residues: MTINYQFGDVDDHGAMIRAQAGLLEAEHQAIIRDVLTASDFWGGAGSAACQGFITQLGRNFQVIYEQANAHGQKVQAAGNNMAQTDSAVGSSWA.

Belongs to the WXG100 family. ESAT-6 subfamily. As to quaternary structure, strongly interacts with EsxK to form a heterodimeric complex under reducing conditions.

Its subcellular location is the secreted. The protein is ESAT-6-like protein EsxL of Mycobacterium bovis (strain ATCC BAA-935 / AF2122/97).